We begin with the raw amino-acid sequence, 486 residues long: Glutamyl-tRNA(Gln) amidotransferase subunit A (486 aa).

Catalysis depends on charge relay system residues Lys-75 and Ser-150. Catalysis depends on Ser-174, which acts as the Acyl-ester intermediate.

It belongs to the amidase family. GatA subfamily. Heterotrimer of A, B and C subunits.

It carries out the reaction L-glutamyl-tRNA(Gln) + L-glutamine + ATP + H2O = L-glutaminyl-tRNA(Gln) + L-glutamate + ADP + phosphate + H(+). In terms of biological role, allows the formation of correctly charged Gln-tRNA(Gln) through the transamidation of misacylated Glu-tRNA(Gln) in organisms which lack glutaminyl-tRNA synthetase. The reaction takes place in the presence of glutamine and ATP through an activated gamma-phospho-Glu-tRNA(Gln). This is Glutamyl-tRNA(Gln) amidotransferase subunit A from Nostoc sp. (strain PCC 7120 / SAG 25.82 / UTEX 2576).